The following is a 132-amino-acid chain: Regulator of ribonuclease activity B (132 aa).

Belongs to the RraB family. As to quaternary structure, interacts with the C-terminal region of Rne.

It is found in the cytoplasm. In terms of biological role, globally modulates RNA abundance by binding to RNase E (Rne) and regulating its endonucleolytic activity. Can modulate Rne action in a substrate-dependent manner by altering the composition of the degradosome. This Alteromonas mediterranea (strain DSM 17117 / CIP 110805 / LMG 28347 / Deep ecotype) protein is Regulator of ribonuclease activity B.